The sequence spans 250 residues: Exosome complex component Rrp41 (250 aa).

Belongs to the RNase PH family. Rrp41 subfamily. In terms of assembly, component of the archaeal exosome complex. Forms a hexameric ring-like arrangement composed of 3 Rrp41-Rrp42 heterodimers. The hexameric ring associates with a trimer of Rrp4 and/or Csl4 subunits.

The protein localises to the cytoplasm. In terms of biological role, catalytic component of the exosome, which is a complex involved in RNA degradation. Has 3'-&gt;5' exoribonuclease activity. Can also synthesize heteromeric RNA-tails. The protein is Exosome complex component Rrp41 of Pyrococcus furiosus (strain ATCC 43587 / DSM 3638 / JCM 8422 / Vc1).